Consider the following 402-residue polypeptide: Beta-1,4-galactosyltransferase 1 (402 aa).

At 1 to 24 (MKFREPLLGGSAAMPGASLQRACR) the chain is on the cytoplasmic side. A helical; Signal-anchor for type II membrane protein transmembrane segment spans residues 25-44 (LLVAVCALHLGVTLVYYLAG). Over 45 to 402 (RDLRRLPQLV…KITVDIGTPS (358 aa)) the chain is Lumenal. The interval 77–130 (LRLRGVAPPPPLQNSSKPRSRAPSNLDAYSHPGPGPGPGSNLTSAPVPSTTTRS) is disordered. Residues N90 and N117 are each glycosylated (N-linked (GlcNAc...) asparagine). The segment covering 116–130 (SNLTSAPVPSTTTRS) has biased composition (polar residues). C134 and C176 form a disulfide bridge. UDP-alpha-D-galactose is bound by residues 187 to 191 (PFRNR), 226 to 228 (FNR), 253 to 254 (VD), and W314. C247 and C266 are oxidised to a cystine. D254 provides a ligand contact to Mn(2+). 316–319 (GEDD) contributes to the N-acetyl-D-glucosamine binding site. H347 serves as a coordination point for Mn(2+). 347–349 (HSR) is a UDP-alpha-D-galactose binding site. R359 is an N-acetyl-D-glucosamine binding site.

It belongs to the glycosyltransferase 7 family. In terms of assembly, homodimer; and heterodimer with alpha-lactalbumin to form lactose synthase. Interacts (via N-terminal cytoplasmic domain) with UBE2Q1 (via N-terminus); the interaction is direct. The cofactor is Mn(2+). In terms of processing, the soluble form derives from the membrane forms by proteolytic processing. In terms of tissue distribution, detected in milk (at protein level).

The protein localises to the golgi apparatus. It is found in the golgi stack membrane. It localises to the cell membrane. The protein resides in the cell surface. Its subcellular location is the cell projection. The protein localises to the filopodium. It is found in the secreted. The catalysed reaction is D-glucose + UDP-alpha-D-galactose = lactose + UDP + H(+). The enzyme catalyses an N-acetyl-beta-D-glucosaminyl derivative + UDP-alpha-D-galactose = a beta-D-galactosyl-(1-&gt;4)-N-acetyl-beta-D-glucosaminyl derivative + UDP + H(+). It carries out the reaction N-acetyl-D-glucosamine + UDP-alpha-D-galactose = beta-D-galactosyl-(1-&gt;4)-N-acetyl-D-glucosamine + UDP + H(+). It catalyses the reaction a beta-D-GlcNAc-(1-&gt;3)-beta-D-Gal-(1-&gt;4)-beta-D-Glc-(1&lt;-&gt;1)-Cer(d18:1(4E)) + UDP-alpha-D-galactose = a neolactoside nLc4Cer(d18:1(4E)) + UDP + H(+). The catalysed reaction is a beta-D-glucosylceramide + UDP-alpha-D-galactose = a beta-D-galactosyl-(1-&gt;4)-beta-D-glucosyl-(1&lt;-&gt;1)-ceramide + UDP + H(+). The enzyme catalyses a neolactoside IV(3)-beta-GlcNAc-nLc4Cer + UDP-alpha-D-galactose = a neolactoside nLc6Cer + UDP + H(+). The protein operates within protein modification; protein glycosylation. Functionally, the Golgi complex form catalyzes the production of lactose in the lactating mammary gland and could also be responsible for the synthesis of complex-type N-linked oligosaccharides in many glycoproteins as well as the carbohydrate moieties of glycolipids. In terms of biological role, the cell surface form functions as a recognition molecule during a variety of cell to cell and cell to matrix interactions, as those occurring during development and egg fertilization, by binding to specific oligosaccharide ligands on opposing cells or in the extracellular matrix. The secreted form is responsible for the synthesis of complex-type to N-linked oligosaccharides in many glycoproteins as well as the carbohydrate moieties of glycolipids. The protein is Beta-1,4-galactosyltransferase 1 (B4GALT1) of Bos taurus (Bovine).